The sequence spans 377 residues: Mucin-7 (377 aa).

The N-terminal stretch at 1-22 (MKTLPLFVCICALSACFSFSEG) is a signal peptide. The disordered stretch occupies residues 70 to 100 (CRPKLPPSPNNPPKFPNPHQPPKHPDKNSSV). Positions 73-89 (KLPPSPNNPPKFPNPHQ) are enriched in pro residues. 4 N-linked (GlcNAc...) asparagine glycosylation sites follow: Asn-97, Asn-128, Asn-135, and Asn-146. The disordered stretch occupies residues 150–355 (SVATLAPVNS…QPTSAPGQNK (206 aa)). Repeat copies occupy residues 165–187 (TTAA…APPE), 188–210 (TTAA…APPE), 211–233 (TTAA…APPE), 234–256 (TTAA…APPE), 257–279 (TTAV…APPE), and 280–302 (TTAA…APQE). Positions 169–183 (PPTPSATTPAPPSSS) are enriched in pro residues. O-linked (GalNAc) threonine; by GALNT13 glycosylation occurs at Thr-176. 2 O-linked (GalNAc) serine; by GALNT13 glycosylation sites follow: Ser-182 and Ser-183. Residues 184–214 (APPETTAAPPTPSATTQAPPSSSAPPETTAA) show a composition bias toward low complexity. 2 O-linked (GalNAc) threonine; by GALNT13 glycosylation sites follow: Thr-188 and Thr-189. Residues 215-229 (PPTPPATTPAPPSSS) show a composition bias toward pro residues. Over residues 230–283 (APPETTAAPPTPSATTPAPLSSSAPPETTAVPPTPSATTLDPSSASAPPETTAA) the composition is skewed to low complexity. Residues 284-298 (PPTPSATTPAPPSSP) show a composition bias toward pro residues. Residues 309-329 (TTPNSSPTTLAPDTSETSAAP) show a composition bias toward polar residues. Residues 330-348 (THQTTTSVTTQTTTTKQPT) show a composition bias toward low complexity.

As to quaternary structure, monomer. Post-translationally, N- and O-glycosylated. Contains fucose, mannose, galactose, N-acetylglucosamine and N-acetylgalactosamine. As to expression, expressed in salivary gland tissues and only in those that contain mucous acinar cells (e.g. sublingual and submandibular glands) and not in salivary glands containing only serous acinar cells (e.g. parotid gland).

It is found in the secreted. Its function is as follows. May function in a protective capacity by promoting the clearance of bacteria in the oral cavity and aiding in mastication, speech, and swallowing. Binds P.aeruginosa pili. The polypeptide is Mucin-7 (MUC7) (Homo sapiens (Human)).